A 1050-amino-acid polypeptide reads, in one-letter code: Transcription intermediary factor 1-alpha (1050 aa).

A Glycyl lysine isopeptide (Lys-Gly) (interchain with G-Cter in SUMO2) cross-link involves residue Lys7. A compositionally biased stretch (low complexity) spans 15–30 (ASAAASGGPSAAPSGE). The disordered stretch occupies residues 15-44 (ASAAASGGPSAAPSGENEAESRQGPDSERG). Residues 33 to 44 (AESRQGPDSERG) are compositionally biased toward basic and acidic residues. Residues 56–82 (CAVCHQNIQSRAPKLLPCLHSFCQRCL) form an RING-type zinc finger. Residue Thr101 is modified to Phosphothreonine. At Ser110 the chain carries Phosphoserine. B box-type zinc fingers lie at residues 158-211 (KSNQ…VSPE) and 218-259 (QRPV…YQFI). The Zn(2+) site is built by Cys163, Cys166, Cys187, and His200. Lys205 participates in a covalent cross-link: Glycyl lysine isopeptide (Lys-Gly) (interchain with G-Cter in SUMO2). Zn(2+) contacts are provided by Cys223, His226, Cys246, and His251. Residue Lys276 forms a Glycyl lysine isopeptide (Lys-Gly) (interchain with G-Cter in SUMO2) linkage. Positions 289 to 359 (NQIQNRIIEV…AGLSKQLEHV (71 aa)) form a coiled coil. The interval 429 to 456 (ESQPQMPKQNPVVEQNSQPPSGLSSNQL) is disordered. The span at 431–456 (QPQMPKQNPVVEQNSQPPSGLSSNQL) shows a compositional bias: polar residues. Glycyl lysine isopeptide (Lys-Gly) (interchain with G-Cter in SUMO2) cross-links involve residues Lys436 and Lys458. Position 469 is an omega-N-methylarginine (Arg469). Composition is skewed to low complexity over residues 476–490 (QVMA…RPAP) and 499–510 (QGPIQQPSISHQ). The disordered stretch occupies residues 476–550 (QVMAQRQQVQ…PPNQNIPRQA (75 aa)). A compositionally biased stretch (pro residues) spans 526-535 (PNGPVLPPHP). Residue Lys552 forms a Glycyl lysine isopeptide (Lys-Gly) (interchain with G-Cter in SUMO2) linkage. The segment at 571–594 (ISSGQGTPSTTNSTSSTPSSPTIT) is disordered. Residues 577–594 (TPSTTNSTSSTPSSPTIT) are compositionally biased toward low complexity. Residue Lys641 forms a Glycyl lysine isopeptide (Lys-Gly) (interchain with G-Cter in SUMO2) linkage. The tract at residues 643–712 (TNIDHGQPRP…PAGADSTHKV (70 aa)) is disordered. Ser654, Ser660, and Ser667 each carry phosphoserine. Positions 654–666 (SNRTVQSPNSSVP) are enriched in polar residues. The segment covering 685-707 (SPSASSVGSRGSSGSSSKPAGAD) has biased composition (low complexity). Residues Lys702 and Lys711 each participate in a glycyl lysine isopeptide (Lys-Gly) (interchain with G-Cter in SUMO2) cross-link. Residue Lys723 forms a Glycyl lysine isopeptide (Lys-Gly) (interchain with G-Cter in SUMO1); alternate linkage. Lys723 is covalently cross-linked (Glycyl lysine isopeptide (Lys-Gly) (interchain with G-Cter in SUMO2); alternate). Lys741 participates in a covalent cross-link: Glycyl lysine isopeptide (Lys-Gly) (interchain with G-Cter in SUMO2). Ser744 is subject to Phosphoserine. The tract at residues 754–779 (NYPRSILTSLLLNSSQSSTSEETVLR) is nuclear receptor binding site (NRBS). A disordered region spans residues 766 to 824 (NSSQSSTSEETVLRSDAPDSTGDQPGLHQDNSSNGKSEWLDPSQKSPLHVGETRKEDDP). At Ser768 the chain carries Phosphoserine; by ATM. Lys801 participates in a covalent cross-link: Glycyl lysine isopeptide (Lys-Gly) (interchain with G-Cter in SUMO2). The residue at position 808 (Ser808) is a Phosphoserine. Lys810 participates in a covalent cross-link: Glycyl lysine isopeptide (Lys-Gly) (interchain with G-Cter in SUMO2). The residue at position 811 (Ser811) is a Phosphoserine. The residue at position 818 (Thr818) is a Phosphothreonine. The segment at 826–873 (EDWCAVCQNGGELLCCEKCPKVFHLSCHVPTLTNFPSGEWICTFCRDL) adopts a PHD-type zinc-finger fold. Residues 834-840 (NGGELLC) form an interaction with histone H3 that is not methylated at 'Lys-4' (H3K4me0) region. Residue Lys875 forms a Glycyl lysine isopeptide (Lys-Gly) (interchain with G-Cter in SUMO2) linkage. Residues 891 to 907 (KKKTEGLVKLTPIDKRK) carry the Nuclear localization signal motif. The 106-residue stretch at 899–1004 (KLTPIDKRKC…NYFEELLKNL (106 aa)) folds into the Bromo domain. A Glycyl lysine isopeptide (Lys-Gly) (interchain with G-Cter in SUMO2) cross-link involves residue Lys949. The segment at 979-980 (FN) is interaction with histone H3 that is acetylated at 'Lys-23' (H3K23ac). A Glycyl lysine isopeptide (Lys-Gly) (interchain with G-Cter in SUMO2) cross-link involves residue Lys992. Residues 1011–1026 (PKPEFRNESEDNKFSD) show a composition bias toward basic and acidic residues. The interval 1011-1036 (PKPEFRNESEDNKFSDDSDDDFVQPR) is disordered. Ser1019, Ser1025, and Ser1028 each carry phosphoserine. A Glycyl lysine isopeptide (Lys-Gly) (interchain with G-Cter in SUMO2) cross-link involves residue Lys1041. Position 1042 is a phosphoserine (Ser1042).

Interacts with CARM1, NCOA2/GRIP1, PML, KAT5/TIP60, BRD7, CBX1, CBX3 and CBX5. Part of a coactivator complex containing TRIM24, NCOA2 and CARM1. Interacts with NR3C2/MCR. Interacts with the ligand-binding domain of estrogen receptors (in vitro). Interaction with DNA-bound estrogen receptors requires the presence of estradiol. Interacts with AR and p53/TP53. Interacts (via bromo domain) with histone H3 (via N-terminus), provided that it is not methylated at 'Lys-4' (H3K4me0). Does not interact with histone H3 that is methylated at 'Lys-4' (H3K4me1, H3K4me2 or H3K4me3). Interacts (via bromo domain) with histone H3 (via N-terminus) that is acetylated at 'Lys-23' (H3K23ac). Has the highest affinity for histone H3 that is both unmodified at 'Lys-4' (H3K4me0) and acetylated at 'Lys-23' (H3K23ac). Has very low affinity for histone H3 that is methylated at 'Lys-9' (H3K9me), or acetylated at both 'Lys-9' (H3K9ac) and 'Lys-14' (H3K14ac), or acetylated at 'Lys-27' (H3K27ac) (in vitro). Interacts with TRIM16. Post-translationally, phosphorylated at Ser-768 by ATM kinase induces ubiquitination and degradation during DNA damage. In terms of processing, sumoylated. Undergoes ubiquitination-mediated degradation in response to DNA damage.

Its subcellular location is the nucleus. It is found in the cytoplasm. It localises to the mitochondrion. It catalyses the reaction S-ubiquitinyl-[E2 ubiquitin-conjugating enzyme]-L-cysteine + [acceptor protein]-L-lysine = [E2 ubiquitin-conjugating enzyme]-L-cysteine + N(6)-ubiquitinyl-[acceptor protein]-L-lysine.. The protein operates within protein modification; protein ubiquitination. Transcriptional coactivator that interacts with numerous nuclear receptors and coactivators and modulates the transcription of target genes. Interacts with chromatin depending on histone H3 modifications, having the highest affinity for histone H3 that is both unmodified at 'Lys-4' (H3K4me0) and acetylated at 'Lys-23' (H3K23ac). Has E3 protein-ubiquitin ligase activity. During the DNA damage response, participates in an autoregulatory feedback loop with TP53. Early in response to DNA damage, ATM kinase phosphorylates TRIM24 leading to its ubiquitination and degradation. After sufficient DNA repair has occurred, TP53 activates TRIM24 transcription, ultimately leading to TRIM24-mediated TP53 ubiquitination and degradation. Plays a role in the regulation of cell proliferation and apoptosis, at least in part via its effects on p53/TP53 levels. Up-regulates ligand-dependent transcription activation by AR, GCR/NR3C1, thyroid hormone receptor (TR) and ESR1. Modulates transcription activation by retinoic acid (RA) receptors, including RARA. Plays a role in regulating retinoic acid-dependent proliferation of hepatocytes. Also participates in innate immunity by mediating the specific 'Lys-63'-linked ubiquitination of TRAF3 leading to activation of downstream signal transduction of the type I IFN pathway. Additionally, negatively regulates NLRP3/CASP1/IL-1beta-mediated pyroptosis and cell migration probably by ubiquitinating NLRP3. This chain is Transcription intermediary factor 1-alpha (TRIM24), found in Homo sapiens (Human).